The chain runs to 379 residues: MSDFLPFSRPAMGAEELAAVKTVLDSGWITTGPKNQELEAAFCRLTGNQYAVAVSSATAGMHIALMALGIGEGDEVITPSMTWVSTLNMIVLLGATPVMVDVDRDTLMVTPEHIEAAITPQTKAIIPVHYAGAPADLDAIYALGERYGIPVIEDAAHATGTSYKGRHIGARGTAIFSFHAIKNITCAEGGIVVTDNPQFADKLRSLKFHGLGVDAWDRQSGGRAPQAEVLAPGYKYNLPDLNAAIALAQLQKLDALNARRAAIAAQYHQAMADLPFQPLSLPSWEHIHAWHLFIIRVDEARCGITRDALMASLKTKGIGTGLHFRAAHTQKYYRERFPTLTLPDTEWNSERICSLPLFPDMTESDFDRVITALHQIAGQ.

Position 182 is an N6-(pyridoxal phosphate)lysine (Lys-182).

The protein belongs to the DegT/DnrJ/EryC1 family. ArnB subfamily. Homodimer. The cofactor is pyridoxal 5'-phosphate.

The enzyme catalyses UDP-4-amino-4-deoxy-beta-L-arabinose + 2-oxoglutarate = UDP-beta-L-threo-pentopyranos-4-ulose + L-glutamate. Its pathway is nucleotide-sugar biosynthesis; UDP-4-deoxy-4-formamido-beta-L-arabinose biosynthesis; UDP-4-deoxy-4-formamido-beta-L-arabinose from UDP-alpha-D-glucuronate: step 2/3. It functions in the pathway bacterial outer membrane biogenesis; lipopolysaccharide biosynthesis. In terms of biological role, catalyzes the conversion of UDP-4-keto-arabinose (UDP-Ara4O) to UDP-4-amino-4-deoxy-L-arabinose (UDP-L-Ara4N). The modified arabinose is attached to lipid A and is required for resistance to polymyxin and cationic antimicrobial peptides. The protein is UDP-4-amino-4-deoxy-L-arabinose--oxoglutarate aminotransferase of Salmonella agona (strain SL483).